The sequence spans 514 residues: ATP synthase subunit alpha (514 aa).

An ATP-binding site is contributed by 170–177; it reads GDRQIGKT.

This sequence belongs to the ATPase alpha/beta chains family. F-type ATPases have 2 components, CF(1) - the catalytic core - and CF(0) - the membrane proton channel. CF(1) has five subunits: alpha(3), beta(3), gamma(1), delta(1), epsilon(1). CF(0) has three main subunits: a(1), b(2) and c(9-12). The alpha and beta chains form an alternating ring which encloses part of the gamma chain. CF(1) is attached to CF(0) by a central stalk formed by the gamma and epsilon chains, while a peripheral stalk is formed by the delta and b chains.

The protein resides in the cell inner membrane. The catalysed reaction is ATP + H2O + 4 H(+)(in) = ADP + phosphate + 5 H(+)(out). Functionally, produces ATP from ADP in the presence of a proton gradient across the membrane. The alpha chain is a regulatory subunit. The protein is ATP synthase subunit alpha of Pseudomonas savastanoi pv. phaseolicola (strain 1448A / Race 6) (Pseudomonas syringae pv. phaseolicola (strain 1448A / Race 6)).